The primary structure comprises 670 residues: Probable leucine-rich repeat receptor-like protein kinase At1g68400 (670 aa).

A signal peptide spans 1–29 (MAKSSFFNKHLLLSLLILLQSCLLSSSSS). At 30–274 (TDSETLLNFK…KSNNTSRIST (245 aa)) the chain is on the extracellular side. Asparagine 52, asparagine 79, asparagine 102, asparagine 109, and asparagine 112 each carry an N-linked (GlcNAc...) asparagine glycan. LRR repeat units follow at residues 69 to 91 (RVTRLVLEDINLTGSISSLTSLT), 92 to 114 (SLRVLSLKHNNLSGPIPNLSNLT), 115 to 137 (ALKLLFLSNNQFSGNFPTSITSL), 139 to 162 (RLYRLDLSFNNFSGQIPPDLTDLT), 163 to 185 (HLLTLRLESNRFSGQIPNINLSD), and 186 to 207 (LQDFNVSGNNFNGQIPNSLSQF). Asparagine 149, asparagine 182, and asparagine 190 each carry an N-linked (GlcNAc...) asparagine glycan. Residues 230–266 (SSDPTKPGRPDEAKASPLNKPETVPSSPTSIHGGDKS) form a disordered region. Polar residues predominate over residues 253–266 (VPSSPTSIHGGDKS). Asparagine 268 carries an N-linked (GlcNAc...) asparagine glycan. The helical transmembrane segment at 275 to 295 (ISLIAIILGDFIILSFVSLLL) threads the bilayer. Topologically, residues 296 to 670 (YYCFWRQYAV…EDTCGGTTSQ (375 aa)) are cytoplasmic. The Protein kinase domain maps to 362–636 (RASAEMLGKG…GHVVKLIEDI (275 aa)). The residue at position 364 (serine 364) is a Phosphoserine. Residues 368-376 (LGKGGFGTA) and lysine 390 contribute to the ATP site. Phosphoserine is present on serine 443. Threonine 463 carries the post-translational modification Phosphothreonine. Aspartate 491 acts as the Proton acceptor in catalysis. Phosphothreonine is present on threonine 616.

The protein belongs to the protein kinase superfamily. Ser/Thr protein kinase family.

Its subcellular location is the cell membrane. It catalyses the reaction L-seryl-[protein] + ATP = O-phospho-L-seryl-[protein] + ADP + H(+). It carries out the reaction L-threonyl-[protein] + ATP = O-phospho-L-threonyl-[protein] + ADP + H(+). The chain is Probable leucine-rich repeat receptor-like protein kinase At1g68400 from Arabidopsis thaliana (Mouse-ear cress).